The sequence spans 629 residues: tRNA uridine 5-carboxymethylaminomethyl modification enzyme MnmG (629 aa).

13–18 (GGGHAG) contacts FAD. 273–287 (GPRYCPSIEDKVMRF) is a binding site for NAD(+).

This sequence belongs to the MnmG family. As to quaternary structure, homodimer. Heterotetramer of two MnmE and two MnmG subunits. The cofactor is FAD.

The protein localises to the cytoplasm. In terms of biological role, NAD-binding protein involved in the addition of a carboxymethylaminomethyl (cmnm) group at the wobble position (U34) of certain tRNAs, forming tRNA-cmnm(5)s(2)U34. In Photorhabdus laumondii subsp. laumondii (strain DSM 15139 / CIP 105565 / TT01) (Photorhabdus luminescens subsp. laumondii), this protein is tRNA uridine 5-carboxymethylaminomethyl modification enzyme MnmG.